The chain runs to 494 residues: GPI alpha-1,6-mannosyltransferase 2 (494 aa).

Residues 1–13 are Cytoplasmic-facing; sequence MWSLDPSQKEVLR. The helical transmembrane segment at 14 to 34 threads the bilayer; it reads FAVSCRILTLMLQALFNIIIP. The Lumenal portion of the chain corresponds to 35–77; it reads DHHADAFSPPRLASSCSVDQLVEGLLGGLSRWDAEHFLFIAEH. Residues 78–98 traverse the membrane as a helical segment; that stretch reads GYLYEHNFAFFPGFPLALLMG. The Cytoplasmic portion of the chain corresponds to 99 to 113; it reads TELLRPLQGLLSQRS. Residues 114–134 form a helical membrane-spanning segment; sequence CLLVSVALLNFLFSVLAAVTL. Residues 135–136 are Lumenal-facing; it reads HD. A helical transmembrane segment spans residues 137 to 157; it reads LGCLVLGCPRQAFYAAMLFCL. Residues 158–161 lie on the Cytoplasmic side of the membrane; that stretch reads SPAN. A helical transmembrane segment spans residues 162-182; that stretch reads VFLAAGYSEALFAFLTFSAMG. The Lumenal segment spans residues 183–192; it reads QLERGRSWAS. A helical transmembrane segment spans residues 193–213; that stretch reads GLLFALATGVRSNGLVSVGFL. The Cytoplasmic portion of the chain corresponds to 214–234; the sequence is LHAQCRGFFSSLVVLNPLKPL. A helical transmembrane segment spans residues 235–255; the sequence is FKLMASLCLSVLTVSLPFALF. Topologically, residues 256–327 are lumenal; that stretch reads QYYAYTQFCL…RYYELRQVPN (72 aa). The helical transmembrane segment at 328–348 threads the bilayer; the sequence is FLLATPVAVLVVWAAWTYVTT. Residues 349-379 are Cytoplasmic-facing; the sequence is HPWLCLTLGLRRSKDSKKTLEKPHPGFLSPK. Residues 380–400 traverse the membrane as a helical segment; the sequence is VFVYLVHAAGLLLFGSLCMHV. At 401–470 the chain is on the lumenal side; the sequence is QVLTRLLCSS…NWRACSPVTR (70 aa). The helical transmembrane segment at 471–491 threads the bilayer; sequence CILGYFLTYWLLGLLLHCNFL. Residues 492-494 are Cytoplasmic-facing; that stretch reads PWT.

It belongs to the PIGV family. In terms of processing, not N-glycosylated.

The protein localises to the endoplasmic reticulum membrane. The protein operates within glycolipid biosynthesis; glycosylphosphatidylinositol-anchor biosynthesis. In terms of biological role, alpha-1,6-mannosyltransferase that catalyzes the transfer of the second mannose, via an alpha-1,6 bond, from a dolichol-phosphate-mannose (Dol-P-Man) to the alpha-D-Man-(1-&gt;4)-alpha-D-GlcN-(1-&gt;6)-(1-radyl,2-acyl-sn-glycero-3-phospho)-2-acyl-inositol intermediate to generate an alpha-D-Man-(1-&gt;6)-alpha-D-Man-(1-&gt;4)-alpha-D-GlcN-(1-&gt;6)-(1-radyl,2-acyl-sn-glycero-3-phospho)-2-acyl-inositol and participates in the seventh step of the glycosylphosphatidylinositol-anchor biosynthesis. Also transfers the second mannose on a 2-PEtn-alpha-D-Man-(1-&gt;4)-alpha-D-GlcN-(1-&gt;6)-(1-radyl,2-acyl-sn-glycero-3-phospho)-2-acyl-inositol. This chain is GPI alpha-1,6-mannosyltransferase 2, found in Cricetulus griseus (Chinese hamster).